A 202-amino-acid polypeptide reads, in one-letter code: 7-methyl-GTP pyrophosphatase (202 aa).

Asp-70 acts as the Proton acceptor in catalysis.

Belongs to the Maf family. YceF subfamily. A divalent metal cation is required as a cofactor.

It localises to the cytoplasm. The enzyme catalyses N(7)-methyl-GTP + H2O = N(7)-methyl-GMP + diphosphate + H(+). Its function is as follows. Nucleoside triphosphate pyrophosphatase that hydrolyzes 7-methyl-GTP (m(7)GTP). May have a dual role in cell division arrest and in preventing the incorporation of modified nucleotides into cellular nucleic acids. In Pseudoalteromonas translucida (strain TAC 125), this protein is 7-methyl-GTP pyrophosphatase.